The following is a 506-amino-acid chain: Exopolyphosphatase (506 aa).

It belongs to the GppA/Ppx family. In terms of assembly, homodimer. Mg(2+) is required as a cofactor.

It is found in the cell membrane. It catalyses the reaction [phosphate](n) + H2O = [phosphate](n-1) + phosphate + H(+). The catalysed reaction is [phosphate](n) + ATP = [phosphate](n+1) + ADP. With respect to regulation, exopolyphosphatase activity is stimulated by NH(4)(+) and K(+). Phosphotransferase activity is insensitive to the addition of K(+) or NH(4)(+) ions. Degradation of inorganic polyphosphates (polyP). Releases orthophosphate processively from the ends of the polyP chain. Also has polyphosphate:ADP phosphotransferase activity, catalyzing the production of ATP from ADP and polyP. This chain is Exopolyphosphatase, found in Pseudomonas aeruginosa (strain ATCC 15692 / DSM 22644 / CIP 104116 / JCM 14847 / LMG 12228 / 1C / PRS 101 / PAO1).